Reading from the N-terminus, the 495-residue chain is tRNA-guanine(15) transglycosylase (495 aa).

The active-site Nucleophile is the D83. Residue D118 coordinates substrate. C273 and C278 together coordinate Zn(2+).

It belongs to the archaeosine tRNA-ribosyltransferase family. Zn(2+) is required as a cofactor.

It catalyses the reaction guanosine(15) in tRNA + 7-cyano-7-deazaguanine = 7-cyano-7-carbaguanosine(15) in tRNA + guanine. Its pathway is tRNA modification; archaeosine-tRNA biosynthesis. Its function is as follows. Exchanges the guanine residue with 7-cyano-7-deazaguanine (preQ0) at position 15 in the dihydrouridine loop (D-loop) of archaeal tRNAs. The protein is tRNA-guanine(15) transglycosylase of Pyrobaculum aerophilum (strain ATCC 51768 / DSM 7523 / JCM 9630 / CIP 104966 / NBRC 100827 / IM2).